We begin with the raw amino-acid sequence, 245 residues long: tRNA (guanine-N(1)-)-methyltransferase (245 aa).

Residues Gly113 and 133-138 (IGDYVL) each bind S-adenosyl-L-methionine.

The protein belongs to the RNA methyltransferase TrmD family. As to quaternary structure, homodimer.

The protein localises to the cytoplasm. The catalysed reaction is guanosine(37) in tRNA + S-adenosyl-L-methionine = N(1)-methylguanosine(37) in tRNA + S-adenosyl-L-homocysteine + H(+). Functionally, specifically methylates guanosine-37 in various tRNAs. The chain is tRNA (guanine-N(1)-)-methyltransferase from Anoxybacillus flavithermus (strain DSM 21510 / WK1).